The sequence spans 120 residues: Large ribosomal subunit protein eL8 (120 aa).

This sequence belongs to the eukaryotic ribosomal protein eL8 family. As to quaternary structure, part of the 50S ribosomal subunit. Probably part of the RNase P complex.

The protein resides in the cytoplasm. In terms of biological role, multifunctional RNA-binding protein that recognizes the K-turn motif in ribosomal RNA, the RNA component of RNase P, box H/ACA, box C/D and box C'/D' sRNAs. The polypeptide is Large ribosomal subunit protein eL8 (Methanosarcina mazei (strain ATCC BAA-159 / DSM 3647 / Goe1 / Go1 / JCM 11833 / OCM 88) (Methanosarcina frisia)).